The primary structure comprises 336 residues: tRNA N6-adenosine threonylcarbamoyltransferase (336 aa).

Fe cation is bound by residues His114 and His118. Residues 136-140 (LVSGG), Asp169, Gly182, Asp186, and Asn275 contribute to the substrate site. Asp301 lines the Fe cation pocket.

It belongs to the KAE1 / TsaD family. It depends on Fe(2+) as a cofactor.

The protein localises to the cytoplasm. The enzyme catalyses L-threonylcarbamoyladenylate + adenosine(37) in tRNA = N(6)-L-threonylcarbamoyladenosine(37) in tRNA + AMP + H(+). Required for the formation of a threonylcarbamoyl group on adenosine at position 37 (t(6)A37) in tRNAs that read codons beginning with adenine. Is involved in the transfer of the threonylcarbamoyl moiety of threonylcarbamoyl-AMP (TC-AMP) to the N6 group of A37, together with TsaE and TsaB. TsaD likely plays a direct catalytic role in this reaction. This is tRNA N6-adenosine threonylcarbamoyltransferase from Streptococcus pneumoniae serotype 19F (strain G54).